Consider the following 445-residue polypeptide: 23S rRNA (uracil(1939)-C(5))-methyltransferase RlmD (445 aa).

The TRAM domain maps to 6–64 (RRLPREPFEIAITGLSHEGRGIAHHDERTLFVHGALPGERVRAVYTKRRRSVAEARVVE). The [4Fe-4S] cluster site is built by Cys77, Cys83, Cys86, and Cys165. 6 residues coordinate S-adenosyl-L-methionine: Gln274, Phe303, Asn308, Glu324, Asp351, and Asp372. Cys398 acts as the Nucleophile in catalysis.

Belongs to the class I-like SAM-binding methyltransferase superfamily. RNA M5U methyltransferase family. RlmD subfamily.

The catalysed reaction is uridine(1939) in 23S rRNA + S-adenosyl-L-methionine = 5-methyluridine(1939) in 23S rRNA + S-adenosyl-L-homocysteine + H(+). Catalyzes the formation of 5-methyl-uridine at position 1939 (m5U1939) in 23S rRNA. This Alkalilimnicola ehrlichii (strain ATCC BAA-1101 / DSM 17681 / MLHE-1) protein is 23S rRNA (uracil(1939)-C(5))-methyltransferase RlmD.